The sequence spans 51 residues: UPF0181 protein VVA0806 (51 aa).

It belongs to the UPF0181 family.

In Vibrio vulnificus (strain YJ016), this protein is UPF0181 protein VVA0806.